A 136-amino-acid chain; its full sequence is NADPH-dependent 7-cyano-7-deazaguanine reductase (136 aa).

Residue Cys50 is the Thioimide intermediate of the active site. The Proton donor role is filled by Asp57. Substrate contacts are provided by residues 72–74 (YEL) and 91–92 (HE).

Belongs to the GTP cyclohydrolase I family. QueF type 1 subfamily.

It is found in the cytoplasm. The enzyme catalyses 7-aminomethyl-7-carbaguanine + 2 NADP(+) = 7-cyano-7-deazaguanine + 2 NADPH + 3 H(+). The protein operates within tRNA modification; tRNA-queuosine biosynthesis. Functionally, catalyzes the NADPH-dependent reduction of 7-cyano-7-deazaguanine (preQ0) to 7-aminomethyl-7-deazaguanine (preQ1). The protein is NADPH-dependent 7-cyano-7-deazaguanine reductase of Prochlorococcus marinus (strain MIT 9312).